The sequence spans 415 residues: MFS-type transporter FVEG_12626 (415 aa).

Over residues 1-18 (MDPDTEQMRVEKPNHEQP) the composition is skewed to basic and acidic residues. The segment at 1–22 (MDPDTEQMRVEKPNHEQPKPNT) is disordered. The next 6 helical transmembrane spans lie at 27-47 (GGFK…VGVF), 63-83 (TVSW…PFVG), 93-113 (YLLL…SISS), 118-138 (YILS…YPSF), 151-171 (LALG…PIVV), and 178-198 (IGFG…LLVT). N-linked (GlcNAc...) asparagine glycosylation occurs at Asn199. The next 6 membrane-spanning stretches (helical) occupy residues 227–247 (FILT…PITF), 264–284 (YLVS…GYIA), 290–310 (FNVS…LWLP), 318–338 (IAFA…SPAL), 354–374 (TMYA…GALI), and 386–406 (VFAG…RLYI).

This sequence belongs to the major facilitator superfamily. Monocarboxylate porter (TC 2.A.1.13) family.

Its subcellular location is the membrane. Its function is as follows. MFS-type transporter; part of the Fusarium detoxification of benzoxazolinone cluster 2 (FDB2) involved in the degradation of benzoxazolinones produced by the host plant. Maize, wheat, and rye produce the 2 benzoxazinone phytoanticipins 2,4-dihy-droxy-7-methoxy-1,4-benzoxazin-3-one (DIMBOA) and 2,4-dihydroxy-1,4-benzoxazin-3-one (DIBOA) that, due to their inherent instability once released, spontaneously degrade to the more stable corresponding benzoxazolinones, 6-methoxy-2-benzoxazolinone (MBOA) and 2-benzoxazolinone (BOA), respectively. The chain is MFS-type transporter FVEG_12626 from Gibberella moniliformis (strain M3125 / FGSC 7600) (Maize ear and stalk rot fungus).